Consider the following 1176-residue polypeptide: Pesticidal crystal protein Cry1Aa (1176 aa).

It belongs to the delta endotoxin family.

In terms of biological role, promotes colloidosmotic lysis by binding to the midgut epithelial cells of many lepidopteran larvae. This chain is Pesticidal crystal protein Cry1Aa (cry1Aa), found in Bacillus thuringiensis subsp. entomocidus.